A 184-amino-acid chain; its full sequence is MAFLKDLYKNKVAKDLQKEFAYSSVMQIPKIEKVVINAGIGNAVADKKHLEAAISELTLITGQRPVETKAKKSIATFKLRAGQSIGAKVTLRGDRMWAFIETLFNIALPRVRDFKGISNNSFDNQGNYTLGIKEQIIFPQVVYDDVKSVRGFDVTFVTTAKTAQEAKALLVGLGAPFQKVRGDK.

It belongs to the universal ribosomal protein uL5 family. As to quaternary structure, part of the 50S ribosomal subunit; part of the 5S rRNA/L5/L18/L25 subcomplex. Contacts the 5S rRNA and the P site tRNA. Forms a bridge to the 30S subunit in the 70S ribosome.

In terms of biological role, this is one of the proteins that bind and probably mediate the attachment of the 5S RNA into the large ribosomal subunit, where it forms part of the central protuberance. In the 70S ribosome it contacts protein S13 of the 30S subunit (bridge B1b), connecting the 2 subunits; this bridge is implicated in subunit movement. Contacts the P site tRNA; the 5S rRNA and some of its associated proteins might help stabilize positioning of ribosome-bound tRNAs. This chain is Large ribosomal subunit protein uL5, found in Ureaplasma parvum serovar 3 (strain ATCC 27815 / 27 / NCTC 11736).